The chain runs to 208 residues: 3,4-dihydroxy-2-butanone 4-phosphate synthase (208 aa).

Residue T3 is modified to Phosphothreonine. A Mg(2+)-binding site is contributed by E27. D-ribulose 5-phosphate is bound at residue D31. S-glutathionyl cysteine; by GRX2 is present on C56. Residues T88 and 145–149 (RRGHT) each bind D-ribulose 5-phosphate. H148 serves as a coordination point for Mg(2+).

Belongs to the DHBP synthase family. As to quaternary structure, homodimer. Mg(2+) is required as a cofactor. Mn(2+) serves as cofactor. In terms of processing, S-glutathionylation of Cys-56 is reversible and dependent on the cytoplasmic isoform of glutaredoxin-2.

Its subcellular location is the cytoplasm. It is found in the nucleus. It localises to the mitochondrion intermembrane space. The enzyme catalyses D-ribulose 5-phosphate = (2S)-2-hydroxy-3-oxobutyl phosphate + formate + H(+). Its pathway is cofactor biosynthesis; riboflavin biosynthesis; 2-hydroxy-3-oxobutyl phosphate from D-ribulose 5-phosphate: step 1/1. Functionally, catalyzes the conversion of D-ribulose 5-phosphate to formate and 3,4-dihydroxy-2-butanone 4-phosphate. Also has an unrelated function in expression of mitochondrial respiration. This Saccharomyces cerevisiae (strain ATCC 204508 / S288c) (Baker's yeast) protein is 3,4-dihydroxy-2-butanone 4-phosphate synthase (RIB3).